The chain runs to 347 residues: Metacaspase-2 (347 aa).

The segment at 1-70 is regulates substrate access to the active site; the sequence is MCSLITQLCD…QPWVATPLPG (70 aa). Residue histidine 158 is part of the active site. Ca(2+) contacts are provided by aspartate 173, aspartate 189, and aspartate 190. Cysteine 213 is a catalytic residue. Aspartate 220 is a Ca(2+) binding site.

It belongs to the peptidase C14B family. As to quaternary structure, monomer. Auto-proteolytic cleavage of the propeptide after Lys-55 and between the large and small subunits after Lys-268 is required for catalytic activity towards large protein substrates but is dispensable towards small oligopeptide substrates. After processing, the propeptide and the large and small subunits remain associated by non-covalent bonds. In vivo, the unprocessed enzyme appears to be the predominant form.

It localises to the recycling endosome. With respect to regulation, activated by Ca(2+). In response to calcium binding, the 280-loop, the 280-loop, a disordered loop consisting of residues 269-275, undergoes a conformational change which stabilizes substrates in the active site. The binding to the substrate triggers the release of the N-terminal region resulting in the activation of the enzyme. Proteolytic cleavage is required for catalytic activity towards large protein substrates. Functionally, cysteine protease that cleaves specifically after arginine or lysine residues. In Trypanosoma brucei brucei, this protein is Metacaspase-2.